A 119-amino-acid chain; its full sequence is Ribonuclease P protein component (119 aa).

It belongs to the RnpA family. In terms of assembly, consists of a catalytic RNA component (M1 or rnpB) and a protein subunit.

The enzyme catalyses Endonucleolytic cleavage of RNA, removing 5'-extranucleotides from tRNA precursor.. Its function is as follows. RNaseP catalyzes the removal of the 5'-leader sequence from pre-tRNA to produce the mature 5'-terminus. It can also cleave other RNA substrates such as 4.5S RNA. The protein component plays an auxiliary but essential role in vivo by binding to the 5'-leader sequence and broadening the substrate specificity of the ribozyme. The sequence is that of Ribonuclease P protein component from Nitrosococcus oceani (strain ATCC 19707 / BCRC 17464 / JCM 30415 / NCIMB 11848 / C-107).